A 61-amino-acid chain; its full sequence is Cobrotoxin-b (61 aa).

4 disulfide bridges follow: Cys3–Cys23, Cys17–Cys40, Cys42–Cys53, and Cys54–Cys59.

Belongs to the three-finger toxin family. Short-chain subfamily. Type I alpha-neurotoxin sub-subfamily. As to expression, expressed by the venom gland.

It localises to the secreted. Its function is as follows. Produces peripheral paralysis by blocking neuromuscular transmission at the postsynaptic site. Binds to the nicotinic acetylcholine receptor. The polypeptide is Cobrotoxin-b (Naja kaouthia (Monocled cobra)).